The sequence spans 233 residues: Ubiquinone biosynthesis O-methyltransferase (233 aa).

Residues Arg37, Gly56, Asp77, and Met121 each coordinate S-adenosyl-L-methionine.

It belongs to the methyltransferase superfamily. UbiG/COQ3 family.

It carries out the reaction a 3-demethylubiquinol + S-adenosyl-L-methionine = a ubiquinol + S-adenosyl-L-homocysteine + H(+). The enzyme catalyses a 3-(all-trans-polyprenyl)benzene-1,2-diol + S-adenosyl-L-methionine = a 2-methoxy-6-(all-trans-polyprenyl)phenol + S-adenosyl-L-homocysteine + H(+). It participates in cofactor biosynthesis; ubiquinone biosynthesis. Its function is as follows. O-methyltransferase that catalyzes the 2 O-methylation steps in the ubiquinone biosynthetic pathway. The sequence is that of Ubiquinone biosynthesis O-methyltransferase from Azoarcus sp. (strain BH72).